A 219-amino-acid polypeptide reads, in one-letter code: 7-methyl-GTP pyrophosphatase (219 aa).

Asp-89 serves as the catalytic Proton acceptor.

It belongs to the Maf family. YceF subfamily. A divalent metal cation serves as cofactor.

The protein localises to the cytoplasm. It carries out the reaction N(7)-methyl-GTP + H2O = N(7)-methyl-GMP + diphosphate + H(+). Its function is as follows. Nucleoside triphosphate pyrophosphatase that hydrolyzes 7-methyl-GTP (m(7)GTP). May have a dual role in cell division arrest and in preventing the incorporation of modified nucleotides into cellular nucleic acids. This is 7-methyl-GTP pyrophosphatase from Polaromonas sp. (strain JS666 / ATCC BAA-500).